Here is a 333-residue protein sequence, read N- to C-terminus: Holliday junction branch migration complex subunit RuvB (333 aa).

The interval 1 to 182 (MDERLLSGES…FGVLSRLEYY (182 aa)) is large ATPase domain (RuvB-L). ATP-binding positions include leucine 21, arginine 22, glycine 63, lysine 66, threonine 67, threonine 68, 129–131 (EDF), arginine 172, tyrosine 182, and arginine 219. Residue threonine 67 coordinates Mg(2+). The interval 183 to 253 (TVDQLSEIVE…ITQMALELLQ (71 aa)) is small ATPAse domain (RuvB-S). Positions 256 to 333 (KLGLDHIDHK…EHFGMEMPKV (78 aa)) are head domain (RuvB-H). DNA-binding residues include arginine 311 and arginine 316.

The protein belongs to the RuvB family. Homohexamer. Forms an RuvA(8)-RuvB(12)-Holliday junction (HJ) complex. HJ DNA is sandwiched between 2 RuvA tetramers; dsDNA enters through RuvA and exits via RuvB. An RuvB hexamer assembles on each DNA strand where it exits the tetramer. Each RuvB hexamer is contacted by two RuvA subunits (via domain III) on 2 adjacent RuvB subunits; this complex drives branch migration. In the full resolvosome a probable DNA-RuvA(4)-RuvB(12)-RuvC(2) complex forms which resolves the HJ.

It is found in the cytoplasm. The enzyme catalyses ATP + H2O = ADP + phosphate + H(+). Functionally, the RuvA-RuvB-RuvC complex processes Holliday junction (HJ) DNA during genetic recombination and DNA repair, while the RuvA-RuvB complex plays an important role in the rescue of blocked DNA replication forks via replication fork reversal (RFR). RuvA specifically binds to HJ cruciform DNA, conferring on it an open structure. The RuvB hexamer acts as an ATP-dependent pump, pulling dsDNA into and through the RuvAB complex. RuvB forms 2 homohexamers on either side of HJ DNA bound by 1 or 2 RuvA tetramers; 4 subunits per hexamer contact DNA at a time. Coordinated motions by a converter formed by DNA-disengaged RuvB subunits stimulates ATP hydrolysis and nucleotide exchange. Immobilization of the converter enables RuvB to convert the ATP-contained energy into a lever motion, pulling 2 nucleotides of DNA out of the RuvA tetramer per ATP hydrolyzed, thus driving DNA branch migration. The RuvB motors rotate together with the DNA substrate, which together with the progressing nucleotide cycle form the mechanistic basis for DNA recombination by continuous HJ branch migration. Branch migration allows RuvC to scan DNA until it finds its consensus sequence, where it cleaves and resolves cruciform DNA. This chain is Holliday junction branch migration complex subunit RuvB, found in Bacillus cereus (strain ATCC 10987 / NRS 248).